Reading from the N-terminus, the 227-residue chain is Probable GTP-binding protein EngB (227 aa).

Residues 13–188 (IGLEVAFAGR…AGVMGNWYEY (176 aa)) enclose the EngB-type G domain. GTP is bound by residues 21 to 28 (GRSNAGKS), 48 to 52 (GRTQM), 67 to 70 (DLPG), 134 to 137 (TKAD), and 167 to 169 (FSA). Residues serine 28 and threonine 50 each contribute to the Mg(2+) site.

It belongs to the TRAFAC class TrmE-Era-EngA-EngB-Septin-like GTPase superfamily. EngB GTPase family. Mg(2+) is required as a cofactor.

Necessary for normal cell division and for the maintenance of normal septation. This Psychrobacter cryohalolentis (strain ATCC BAA-1226 / DSM 17306 / VKM B-2378 / K5) protein is Probable GTP-binding protein EngB.